The sequence spans 230 residues: Esterase OVCA2 (230 aa).

Catalysis depends on charge relay system residues Ser-124, Asp-182, and His-209.

Belongs to the LovG family.

The enzyme catalyses a carboxylic ester + H2O = an alcohol + a carboxylate + H(+). Exhibits ester hydrolase activity with a strong preference for long-chain alkyl ester substrates and high selectivity against a variety of short, branched, and substituted esters. Is able to hydrolyze ester bonds within a wide range of p-nitrophenyl derivatives (C2-C14) in vitro, with a strong preference toward substrates of &gt;8 carbons. This is Esterase OVCA2 (ovca2) from Xenopus tropicalis (Western clawed frog).